A 98-amino-acid chain; its full sequence is Feather keratin 2 (98 aa).

Position 2 is an N-acetylserine (Ser-2).

This sequence belongs to the avian keratin family. As to quaternary structure, the avian keratins (F-ker, S-ker, C-ker and B-ker) are a complex mixture of very similar polypeptides.

This chain is Feather keratin 2, found in Gallus gallus (Chicken).